The sequence spans 443 residues: 3-phosphoshikimate 1-carboxyvinyltransferase (443 aa).

Residues 1-22 (MSHASRPTPLEARGSTPLTGRV) form a disordered region. Residues K28, S29, and R33 each coordinate 3-phosphoshikimate. K28 contributes to the phosphoenolpyruvate binding site. Phosphoenolpyruvate is bound by residues G101 and R129. 4 residues coordinate 3-phosphoshikimate: S174, Q176, D326, and K353. Q176 contacts phosphoenolpyruvate. D326 acts as the Proton acceptor in catalysis. Positions 357 and 400 each coordinate phosphoenolpyruvate.

This sequence belongs to the EPSP synthase family. As to quaternary structure, monomer.

Its subcellular location is the cytoplasm. It catalyses the reaction 3-phosphoshikimate + phosphoenolpyruvate = 5-O-(1-carboxyvinyl)-3-phosphoshikimate + phosphate. It participates in metabolic intermediate biosynthesis; chorismate biosynthesis; chorismate from D-erythrose 4-phosphate and phosphoenolpyruvate: step 6/7. Catalyzes the transfer of the enolpyruvyl moiety of phosphoenolpyruvate (PEP) to the 5-hydroxyl of shikimate-3-phosphate (S3P) to produce enolpyruvyl shikimate-3-phosphate and inorganic phosphate. The polypeptide is 3-phosphoshikimate 1-carboxyvinyltransferase (Afipia carboxidovorans (strain ATCC 49405 / DSM 1227 / KCTC 32145 / OM5) (Oligotropha carboxidovorans)).